A 161-amino-acid chain; its full sequence is Ribosome maturation factor RimP (161 aa).

Belongs to the RimP family.

It localises to the cytoplasm. In terms of biological role, required for maturation of 30S ribosomal subunits. In Rickettsia felis (strain ATCC VR-1525 / URRWXCal2) (Rickettsia azadi), this protein is Ribosome maturation factor RimP.